The sequence spans 729 residues: Catalase-peroxidase (729 aa).

The segment at residues Trp95–Tyr218 is a cross-link (tryptophyl-tyrosyl-methioninium (Trp-Tyr) (with M-244)). The active-site Proton acceptor is the His96. The segment at residues Tyr218 to Met244 is a cross-link (tryptophyl-tyrosyl-methioninium (Tyr-Met) (with W-95)). His259 provides a ligand contact to heme b.

Belongs to the peroxidase family. Peroxidase/catalase subfamily. As to quaternary structure, homodimer or homotetramer. Requires heme b as cofactor. In terms of processing, formation of the three residue Trp-Tyr-Met cross-link is important for the catalase, but not the peroxidase activity of the enzyme.

It carries out the reaction H2O2 + AH2 = A + 2 H2O. The enzyme catalyses 2 H2O2 = O2 + 2 H2O. Functionally, bifunctional enzyme with both catalase and broad-spectrum peroxidase activity. The chain is Catalase-peroxidase from Synechococcus sp. (strain CC9605).